Here is a 564-residue protein sequence, read N- to C-terminus: Periplasmic [NiFe] hydrogenase large subunit (564 aa).

4 residues coordinate Ni(2+): C72, C75, C543, and C546. The propeptide occupies 550 to 564 (VIEPETNEILKFKVC).

Belongs to the [NiFe]/[NiFeSe] hydrogenase large subunit family. Heterodimer of a large and a small subunit. Ni(2+) is required as a cofactor.

It localises to the periplasm. The enzyme catalyses 2 Fe(III)-[cytochrome c3] + H2 = 2 Fe(II)-[cytochrome c3] + 2 H(+). This chain is Periplasmic [NiFe] hydrogenase large subunit (hydB), found in Solidesulfovibrio fructosivorans (Desulfovibrio fructosivorans).